A 297-amino-acid polypeptide reads, in one-letter code: Esterase LipU (297 aa).

Active-site residues include Ser-140, Glu-239, and His-269.

The protein belongs to the 'GDXG' lipolytic enzyme family.

It localises to the secreted. The catalysed reaction is a fatty acid ester + H2O = an aliphatic alcohol + a fatty acid + H(+). It catalyses the reaction a butanoate ester + H2O = an aliphatic alcohol + butanoate + H(+). It carries out the reaction an acetyl ester + H2O = an aliphatic alcohol + acetate + H(+). The enzyme catalyses decanoate ester + H2O = decanoate + an aliphatic alcohol + H(+). The catalysed reaction is an octanoate ester + H2O = an aliphatic alcohol + octanoate + H(+). It catalyses the reaction a dodecanoate ester + H2O = an aliphatic alcohol + dodecanoate + H(+). It carries out the reaction hexadecanoate ester + H2O = an aliphatic alcohol + hexadecanoate + H(+). Its activity is regulated as follows. Inhibited by the ionic detergent SDS and by the serine protease inhibitor PMSF. Inhibited by the FDA approved drugs Diosmin, Acarbose and Ouabain. These drugs remain bound in the active site pocket and could be probable drug candidates to combat TB disease. Esterase that shows preference for short chain fatty acids. Contributes to the growth of M.tuberculosis during the nutritive stress. Elicits strong humoral response in both extrapulmonary and relapsed cases of tuberculosis patients. The polypeptide is Esterase LipU (Mycobacterium tuberculosis (strain ATCC 25618 / H37Rv)).